A 240-amino-acid polypeptide reads, in one-letter code: Tumor protein p53-inducible nuclear protein 1 (240 aa).

Residues 25-37 carry the LIR motif; that stretch reads EKEDDEWILVDFI.

As to quaternary structure, interacts with p53/TP53 and HIPK2. Interacts with PRKCG, GABARAP, GABARAPL1, GABARAPL2, MAP1LC3A, MAP1LC3B and MAP1LC3C. Ubiquitously expressed.

The protein resides in the cytoplasm. Its subcellular location is the cytosol. It is found in the nucleus. It localises to the PML body. The protein localises to the cytoplasmic vesicle. The protein resides in the autophagosome. Functionally, antiproliferative and proapoptotic protein involved in cell stress response which acts as a dual regulator of transcription and autophagy. Acts as a positive regulator of autophagy. In response to cellular stress or activation of autophagy, relocates to autophagosomes where it interacts with autophagosome-associated proteins GABARAP, GABARAPL1/L2, MAP1LC3A/B/C and regulates autophagy. Acts as an antioxidant and plays a major role in p53/TP53-driven oxidative stress response. Possesses both a p53/TP53-independent intracellular reactive oxygen species (ROS) regulatory function and a p53/TP53-dependent transcription regulatory function. Positively regulates p53/TP53 and p73/TP73 and stimulates their capacity to induce apoptosis and regulate cell cycle. In response to double-strand DNA breaks, promotes p53/TP53 phosphorylation on 'Ser-46' and subsequent apoptosis. Acts as a tumor suppressor by inducing cell death by an autophagy and caspase-dependent mechanism. Can reduce cell migration by regulating the expression of SPARC. The protein is Tumor protein p53-inducible nuclear protein 1 (TP53INP1) of Homo sapiens (Human).